A 152-amino-acid chain; its full sequence is UPF0266 membrane protein YobD (152 aa).

Residues 1 to 5 (MTITD) are Periplasmic-facing. The helical transmembrane segment at 6–26 (LVLILFIAALLAYALYDQFIM) threads the bilayer. The Cytoplasmic segment spans residues 27-44 (PRRNGPTLLSIALLRRGR). Residues 45–65 (IDSVIFVGLVAILIYNNVTSH) traverse the membrane as a helical segment. Residue glycine 66 is a topological domain, periplasmic. Residues 67–87 (AQMTTWLLSALALMGFYIFWI) form a helical membrane-spanning segment. The Cytoplasmic segment spans residues 88 to 152 (RTPRIIFKQR…KIYKLLIENQ (65 aa)).

This sequence belongs to the UPF0266 family.

The protein localises to the cell inner membrane. The chain is UPF0266 membrane protein YobD (yobD) from Salmonella typhi.